The primary structure comprises 506 residues: DEAD-box ATP-dependent RNA helicase CshA (506 aa).

The Q motif signature appears at 2 to 30 (QNFKELGISDNTVQSLESMGFKEPTPIQK). The Helicase ATP-binding domain occupies 33 to 203 (IPYALQGIDI…QQFMKSPKII (171 aa)). ATP is bound at residue 46–53 (AQTGTGKT). A DEAD box motif is present at residues 150 to 153 (DEAD). In terms of domain architecture, Helicase C-terminal spans 214 to 375 (QIEEFYTIVK…LRPPHRKEVL (162 aa)). The disordered stretch occupies residues 436 to 506 (EKPLSRKGRN…KGRTFADHQK (71 aa)). Basic residues predominate over residues 468–480 (KRSKGYSSKKKST).

It belongs to the DEAD box helicase family. CshA subfamily. In terms of assembly, oligomerizes, may be a member of the RNA degradosome.

The protein localises to the cytoplasm. The catalysed reaction is ATP + H2O = ADP + phosphate + H(+). DEAD-box RNA helicase possibly involved in RNA degradation. Unwinds dsRNA in both 5'- and 3'-directions, has RNA-dependent ATPase activity. In Staphylococcus aureus (strain MRSA252), this protein is DEAD-box ATP-dependent RNA helicase CshA.